The following is a 359-amino-acid chain: Alanine racemase (359 aa).

The active-site Proton acceptor; specific for D-alanine is the K34. The residue at position 34 (K34) is an N6-(pyridoxal phosphate)lysine. Residue R129 participates in substrate binding. Catalysis depends on Y254, which acts as the Proton acceptor; specific for L-alanine. Position 302 (M302) interacts with substrate.

This sequence belongs to the alanine racemase family. The cofactor is pyridoxal 5'-phosphate.

It carries out the reaction L-alanine = D-alanine. The protein operates within amino-acid biosynthesis; D-alanine biosynthesis; D-alanine from L-alanine: step 1/1. Functionally, catalyzes the interconversion of L-alanine and D-alanine. May also act on other amino acids. In Yersinia pestis, this protein is Alanine racemase (alr).